The primary structure comprises 328 residues: DNA repair protein RAD51 homolog 4 (328 aa).

The segment at methionine 1 to serine 83 is preferentially binds ssDNA. Glycine 107–threonine 114 is a binding site for ATP.

This sequence belongs to the RecA family. RAD51 subfamily. As to quaternary structure, part of the BCDX2 complex consisting of RAD51B, RAD51C, RAD51D and XRCC2; the complex has a ring-like structure arranged into a flat disc around a central channel. In the absence of DNA, the BCDX2 subcomplex XRCC2:RAD51D formed a multimeric ring structure; in the presence of single-stranded DNA it formed a filamentous structure with the ssDNA. Interacts with SWSAP1 and ZSWIM7; involved in homologous recombination repair. Interacts with BLM; required for stimulation of BLM activity by the BCDX2 subcomplex XRCC2:RAD51D. In terms of tissue distribution, expressed in colon, prostate, spleen, testis, ovary, thymus and small intestine. Weakly expressed in leukocytes.

The protein localises to the nucleus. The protein resides in the cytoplasm. It is found in the cytoskeleton. It localises to the microtubule organizing center. Its subcellular location is the centrosome. The protein localises to the chromosome. The protein resides in the telomere. Involved in the homologous recombination repair (HRR) pathway of double-stranded DNA breaks arising during DNA replication or induced by DNA-damaging agents. Bind to single-stranded DNA (ssDNA) and has DNA-dependent ATPase activity. Part of the RAD51 paralog protein complex BCDX2 which acts in the BRCA1-BRCA2-dependent HR pathway. Upon DNA damage, BCDX2 acts downstream of BRCA2 recruitment and upstream of RAD51 recruitment. BCDX2 binds predominantly to the intersection of the four duplex arms of the Holliday junction and to junction of replication forks. The BCDX2 complex was originally reported to bind single-stranded DNA, single-stranded gaps in duplex DNA and specifically to nicks in duplex DNA. Involved in telomere maintenance. The BCDX2 subcomplex XRCC2:RAD51D can stimulate Holliday junction resolution by BLM. The chain is DNA repair protein RAD51 homolog 4 (RAD51D) from Homo sapiens (Human).